Consider the following 87-residue polypeptide: Putative membrane protein insertion efficiency factor (87 aa).

This sequence belongs to the UPF0161 family.

It localises to the cell membrane. Could be involved in insertion of integral membrane proteins into the membrane. The chain is Putative membrane protein insertion efficiency factor from Ligilactobacillus salivarius (strain UCC118) (Lactobacillus salivarius).